The following is a 467-amino-acid chain: ATP synthase subunit beta (467 aa).

156–163 contributes to the ATP binding site; the sequence is GGAGVGKT.

Belongs to the ATPase alpha/beta chains family. As to quaternary structure, F-type ATPases have 2 components, CF(1) - the catalytic core - and CF(0) - the membrane proton channel. CF(1) has five subunits: alpha(3), beta(3), gamma(1), delta(1), epsilon(1). CF(0) has three main subunits: a(1), b(2) and c(9-12). The alpha and beta chains form an alternating ring which encloses part of the gamma chain. CF(1) is attached to CF(0) by a central stalk formed by the gamma and epsilon chains, while a peripheral stalk is formed by the delta and b chains.

It localises to the cell membrane. It carries out the reaction ATP + H2O + 4 H(+)(in) = ADP + phosphate + 5 H(+)(out). Produces ATP from ADP in the presence of a proton gradient across the membrane. The catalytic sites are hosted primarily by the beta subunits. This Cytobacillus firmus (Bacillus firmus) protein is ATP synthase subunit beta.